Reading from the N-terminus, the 105-residue chain is Small ribosomal subunit protein uS10 (105 aa).

This sequence belongs to the universal ribosomal protein uS10 family. In terms of assembly, part of the 30S ribosomal subunit.

Its function is as follows. Involved in the binding of tRNA to the ribosomes. The polypeptide is Small ribosomal subunit protein uS10 (Acidobacterium capsulatum (strain ATCC 51196 / DSM 11244 / BCRC 80197 / JCM 7670 / NBRC 15755 / NCIMB 13165 / 161)).